The following is a 301-amino-acid chain: J domain-containing protein 1 (301 aa).

A J domain is found at 58–150; it reads TPYDIFGIPK…KKKIVYDTTR (93 aa). A helical transmembrane segment spans residues 208–228; that stretch reads WTVIGIICGLAICIEGTALLA.

This sequence belongs to the DnaJ family.

The protein localises to the mitochondrion membrane. Probable chaperone. In Saccharomyces cerevisiae (strain ATCC 204508 / S288c) (Baker's yeast), this protein is J domain-containing protein 1 (JID1).